Here is a 590-residue protein sequence, read N- to C-terminus: Vesicular glutamate transporter 3 (590 aa).

The Cytoplasmic portion of the chain corresponds to 1-76 (MPLGGFAGLK…CGCFGLPKRY (76 aa)). Residues 77–97 (IIAMLSGLGFCISFGIRCNLG) form a helical membrane-spanning segment. Residues 98 to 130 (VAIVEMVNNNTVYINGTAVMQPAQFNWDPETVG) are Vesicular-facing. N-linked (GlcNAc...) asparagine glycosylation is found at N106 and N112. Residues 131-151 (LIHGSFFWGYIVTQIPGGFIS) traverse the membrane as a helical segment. Residues 152–153 (NK) are Cytoplasmic-facing. A helical transmembrane segment spans residues 154-174 (LAANRVFGAAIFLTSVLNMFI). Topologically, residues 175–182 (PSAARVHY) are vesicular. Residues 183–203 (GCVMFVRILQGLVEGVTYPAC) form a helical membrane-spanning segment. At 204-221 (HGMWSKWAPPLERSRLAT) the chain is on the cytoplasmic side. A helical membrane pass occupies residues 222 to 242 (TSFCGSYAGAVIAMPLAGILV). Over 243 to 249 (QYVGWPS) the chain is Vesicular. A helical membrane pass occupies residues 250 to 270 (VFYIYGVFGIIWYIFWILLAY). Over 271–315 (NSPAVHPTISEEERNYIETSIGEGANLMSSTEKFKTPWREFFTSM) the chain is Cytoplasmic. Residues 316–336 (PVYAIIVANFCRSWTFYLLLI) traverse the membrane as a helical segment. Residues 337–354 (SQPAYFEEVFGFPISKVG) are Vesicular-facing. Residues 355–375 (ILSAVPHMVMTIIVPIGGQLA) form a helical membrane-spanning segment. At 376–391 (DFLRSRKILSTTTVRK) the chain is on the cytoplasmic side. Residues 392–412 (IMNCGGFGMEATLLLVVGFSH) form a helical membrane-spanning segment. Residues 413 to 414 (TR) are Vesicular-facing. Residues 415–435 (AVAISFLILAVGFSGFAISGF) traverse the membrane as a helical segment. Residues 436–448 (NVNHLDIAPRYAS) are Cytoplasmic-facing. A helical membrane pass occupies residues 449–469 (ILMGISNGVGTLSGMVCPLIV). Over 470–482 (GALTKHKTRLEWQ) the chain is Vesicular. A helical membrane pass occupies residues 483 to 503 (HVFVIASMVHYTGVIFYAIFA). Over 504–587 (SGEKQDWADP…NHYENGEYQT (84 aa)) the chain is Cytoplasmic. Positions 526–535 (EDELADETEP) are enriched in acidic residues. The disordered stretch occupies residues 526–590 (EDELADETEP…ENGEYQTQYQ (65 aa)). The span at 536–557 (SSDSGLATRQKTYGTTDNSSGR) shows a compositional bias: polar residues.

This sequence belongs to the major facilitator superfamily. Sodium/anion cotransporter family. VGLUT subfamily.

Its subcellular location is the cytoplasmic vesicle. The protein resides in the secretory vesicle. It is found in the synaptic vesicle membrane. It localises to the cell membrane. The protein localises to the synapse. Its subcellular location is the synaptosome. It carries out the reaction L-glutamate(out) = L-glutamate(in). The enzyme catalyses 3 Na(+)(out) + phosphate(out) = 3 Na(+)(in) + phosphate(in). The catalysed reaction is chloride(in) = chloride(out). With respect to regulation, the L-glutamate uniporter activity exhibits a biphasic dependence on chloride concentration. Chloride channel activity is allosterically activated by lumenal H(+) and Cl(-) leading to synaptic vesicles acidification. The glutamate transport activity is allosterically activated by lumenal H(+) and Cl(-), preventing non-vesicular L-glutamate release. Multifunctional transporter that transports L-glutamate as well as multiple ions such as chloride, sodium and phosphate. At the synaptic vesicle membrane, mainly functions as an uniporter that mediates the uptake of L-glutamate into synaptic vesicles at presynaptic nerve terminals of excitatory neural cells. The L-glutamate uniporter activity is electrogenic and is driven by the proton electrochemical gradient, mainly by the electrical gradient established by the vacuolar H(+)-ATPase across the synaptic vesicle membrane. In addition, functions as a chloride channel that allows a chloride permeation through the synaptic vesicle membrane that affects the proton electrochemical gradient and promotes synaptic vesicles acidification. At the plasma membrane, following exocytosis, functions as a symporter of Na(+) and phosphate from the extracellular space to the cytoplasm allowing synaptic phosphate homeostasis regulation. The symporter activity is electrogenic. Moreover, operates synergistically with SLC18A3/VACHT under a constant H(+) gradient, thereby allowing striatal vesicular acetylcholine uptake. In Danio rerio (Zebrafish), this protein is Vesicular glutamate transporter 3.